The primary structure comprises 89 residues: Small ribosomal subunit protein uS15 (89 aa).

Basic and acidic residues predominate over residues 1–21 (MVMTAEDKAQVIGEHKKHDGD). A disordered region spans residues 1 to 24 (MVMTAEDKAQVIGEHKKHDGDTGS).

The protein belongs to the universal ribosomal protein uS15 family. Part of the 30S ribosomal subunit. Forms a bridge to the 50S subunit in the 70S ribosome, contacting the 23S rRNA.

One of the primary rRNA binding proteins, it binds directly to 16S rRNA where it helps nucleate assembly of the platform of the 30S subunit by binding and bridging several RNA helices of the 16S rRNA. Functionally, forms an intersubunit bridge (bridge B4) with the 23S rRNA of the 50S subunit in the ribosome. This is Small ribosomal subunit protein uS15 from Solidesulfovibrio magneticus (strain ATCC 700980 / DSM 13731 / RS-1) (Desulfovibrio magneticus).